The chain runs to 246 residues: Bis(5'-nucleosyl)-tetraphosphatase PrpE [asymmetrical] (246 aa).

Belongs to the PrpE family. It depends on Ni(2+) as a cofactor.

It carries out the reaction P(1),P(4)-bis(5'-guanosyl) tetraphosphate + H2O = GMP + GTP + 2 H(+). Asymmetrically hydrolyzes Ap4p to yield AMP and ATP. This Bacillus mycoides (strain KBAB4) (Bacillus weihenstephanensis) protein is Bis(5'-nucleosyl)-tetraphosphatase PrpE [asymmetrical].